The following is a 341-amino-acid chain: Hypophosphite import ATP-binding protein HtxD (341 aa).

The ABC transporter domain maps to L6 to A249. G38–S45 serves as a coordination point for ATP. Residues I278–G341 are disordered. Basic and acidic residues-rich tracts occupy residues A307–T320 and G327–G341.

Belongs to the ABC transporter superfamily. Phosphonates importer (TC 3.A.1.9.1) family. The complex is composed of two ATP-binding proteins (HtxD), two transmembrane proteins (HtxC and HtxE) and a solute-binding protein (HtxB).

The protein localises to the cell inner membrane. It carries out the reaction phosphinate(out) + ATP + H2O = phosphinate(in) + ADP + phosphate + H(+). Its function is as follows. Part of the ABC transporter complex HtxBCDE involved in hypophosphite import. Responsible for energy coupling to the transport system. This chain is Hypophosphite import ATP-binding protein HtxD (htxD), found in Stutzerimonas stutzeri (Pseudomonas stutzeri).